Reading from the N-terminus, the 89-residue chain is Small ribosomal subunit protein uS15 (89 aa).

This sequence belongs to the universal ribosomal protein uS15 family. As to quaternary structure, part of the 30S ribosomal subunit. Forms a bridge to the 50S subunit in the 70S ribosome, contacting the 23S rRNA.

One of the primary rRNA binding proteins, it binds directly to 16S rRNA where it helps nucleate assembly of the platform of the 30S subunit by binding and bridging several RNA helices of the 16S rRNA. Its function is as follows. Forms an intersubunit bridge (bridge B4) with the 23S rRNA of the 50S subunit in the ribosome. The polypeptide is Small ribosomal subunit protein uS15 (Chlorobium luteolum (strain DSM 273 / BCRC 81028 / 2530) (Pelodictyon luteolum)).